The primary structure comprises 439 residues: Ribosomal protein uS12 methylthiotransferase RimO (439 aa).

An MTTase N-terminal domain is found at 3-113 (HKVGFVSLGC…VVNAVHQHLP (111 aa)). Residues Cys12, Cys48, Cys77, Cys144, Cys148, and Cys151 each contribute to the [4Fe-4S] cluster site. In terms of domain architecture, Radical SAM core spans 130–367 (LTPRHYAYLK…MQVQAEISRN (238 aa)). Residues 370 to 436 (KNKIGSTQTV…DYDLYGDLEY (67 aa)) form the TRAM domain.

Belongs to the methylthiotransferase family. RimO subfamily. [4Fe-4S] cluster serves as cofactor.

The protein resides in the cytoplasm. The enzyme catalyses L-aspartate(89)-[ribosomal protein uS12]-hydrogen + (sulfur carrier)-SH + AH2 + 2 S-adenosyl-L-methionine = 3-methylsulfanyl-L-aspartate(89)-[ribosomal protein uS12]-hydrogen + (sulfur carrier)-H + 5'-deoxyadenosine + L-methionine + A + S-adenosyl-L-homocysteine + 2 H(+). Its function is as follows. Catalyzes the methylthiolation of an aspartic acid residue of ribosomal protein uS12. The chain is Ribosomal protein uS12 methylthiotransferase RimO from Legionella pneumophila (strain Corby).